Reading from the N-terminus, the 391-residue chain is Phosphoglycerate kinase (391 aa).

Residues 21-23 (DLN), R36, 59-62 (HLGR), R113, and R146 contribute to the substrate site. ATP contacts are provided by residues K197, E319, and 345–348 (GGDT).

The protein belongs to the phosphoglycerate kinase family. Monomer.

It is found in the cytoplasm. It carries out the reaction (2R)-3-phosphoglycerate + ATP = (2R)-3-phospho-glyceroyl phosphate + ADP. Its pathway is carbohydrate degradation; glycolysis; pyruvate from D-glyceraldehyde 3-phosphate: step 2/5. The chain is Phosphoglycerate kinase from Shewanella baltica (strain OS223).